The following is a 302-amino-acid chain: Zinc finger protein-like 1 homolog (302 aa).

A B box-type; degenerate zinc finger spans residues 1 to 43 (MGLCKCPKRLVTNQFCFEHRVNVCEHCMVQSHPKCIVQSYLQW). The segment at 53–101 (CNLCGTSLEQGECVRLVCYHVFHWDCLNARQAALPANTAPRGHQCPGCS) adopts an RING-type; atypical zinc-finger fold. Residues 168 to 233 (IHSGGERERG…RDDNKYQRRT (66 aa)) are disordered. The span at 198-208 (PPSSGDFNASS) shows a compositional bias: polar residues. Serine 217 carries the post-translational modification Phosphoserine. A helical transmembrane segment spans residues 258-278 (WFLVLSGILAFVMFIYLLAWM).

It belongs to the ZFPL1 family.

Its subcellular location is the membrane. This is Zinc finger protein-like 1 homolog from Drosophila pseudoobscura pseudoobscura (Fruit fly).